The chain runs to 166 residues: Ribosome maturation factor RimP (166 aa).

Belongs to the RimP family.

It localises to the cytoplasm. Required for maturation of 30S ribosomal subunits. The protein is Ribosome maturation factor RimP of Rickettsia akari (strain Hartford).